Consider the following 297-residue polypeptide: tRNA-cytidine(32) 2-sulfurtransferase (297 aa).

Positions 61–66 (SGGKDS) match the PP-loop motif motif. Positions 136, 139, and 227 each coordinate [4Fe-4S] cluster.

The protein belongs to the TtcA family. As to quaternary structure, homodimer. The cofactor is Mg(2+). [4Fe-4S] cluster is required as a cofactor.

It localises to the cytoplasm. It carries out the reaction cytidine(32) in tRNA + S-sulfanyl-L-cysteinyl-[cysteine desulfurase] + AH2 + ATP = 2-thiocytidine(32) in tRNA + L-cysteinyl-[cysteine desulfurase] + A + AMP + diphosphate + H(+). Its pathway is tRNA modification. Its function is as follows. Catalyzes the ATP-dependent 2-thiolation of cytidine in position 32 of tRNA, to form 2-thiocytidine (s(2)C32). The sulfur atoms are provided by the cysteine/cysteine desulfurase (IscS) system. This is tRNA-cytidine(32) 2-sulfurtransferase from Paracoccus denitrificans (strain Pd 1222).